A 924-amino-acid chain; its full sequence is Ubiquitin carboxyl-terminal hydrolase 15 (924 aa).

Cys130, Cys133, Cys141, Cys144, Cys150, Cys154, His163, and Cys167 together coordinate Zn(2+). An MYND-type zinc finger spans residues 130 to 167; sequence CARCFGPAKTRCSRCKSVRYCSGKCQIIHWRVAHKDEC. Residues 226-236 are compositionally biased toward polar residues; it reads DITPQINTQGR. Disordered stretches follow at residues 226-301 and 317-366; these read DITP…VDSS and SHKH…TSKK. Residues 247–256 show a composition bias toward basic and acidic residues; it reads ANRESCRRDS. Residues 331-362 show a composition bias toward polar residues; it reads GCPNTQYPSNGTRTATLPRTGINKSGEQSCTE. Residues 438–744 enclose the USP domain; it reads RGLVNCGNSC…GAYMLFYMRS (307 aa). Cys447 (nucleophile) is an active-site residue. The active-site Proton acceptor is His703. Positions 750–793 are disordered; that stretch reads RGEHNGKAPVHHSQPRNEMKEQRKPVNRFKPRADHKNTESSSSE. The segment covering 764 to 773 has biased composition (basic and acidic residues); sequence PRNEMKEQRK.

The protein belongs to the peptidase C19 family. In terms of assembly, interacts with DA1. As to expression, highly expressed in rosette leaves and inflorescence. Expressed at low levels in cotyledons, stems, cauline leaves and siliques.

It is found in the cytoplasm. The protein resides in the nucleus. The catalysed reaction is Thiol-dependent hydrolysis of ester, thioester, amide, peptide and isopeptide bonds formed by the C-terminal Gly of ubiquitin (a 76-residue protein attached to proteins as an intracellular targeting signal).. Functionally, recognizes and hydrolyzes the peptide bond at the C-terminal Gly of ubiquitin. Involved in the processing of poly-ubiquitin precursors as well as that of ubiquitinated proteins. Involved in the regulation of organ size. Acts as a positive regulator of cell proliferation. Possesses deubiquitinating enzyme activity in vitro. The enzyme activity of UBP15 is required for its function in regulation of cell proliferation. Functions antagonistically in a common pathway with DA1 to regulate seed size. Acts maternally to regulate seed size by promoting cell proliferation in the integuments of ovules and developing seeds. Functions independently of DA2 and BB. This is Ubiquitin carboxyl-terminal hydrolase 15 from Arabidopsis thaliana (Mouse-ear cress).